Here is a 276-residue protein sequence, read N- to C-terminus: Large ribosomal subunit protein uL2 (276 aa).

The tract at residues 221–276 is disordered; that stretch reads RGSVMNPNDHPHGGGEGRAPIGRKAPVTPWGKPTLGLKTRKKKNKSDQYIIRRRKK.

The protein belongs to the universal ribosomal protein uL2 family. As to quaternary structure, part of the 50S ribosomal subunit. Forms a bridge to the 30S subunit in the 70S ribosome.

Functionally, one of the primary rRNA binding proteins. Required for association of the 30S and 50S subunits to form the 70S ribosome, for tRNA binding and peptide bond formation. It has been suggested to have peptidyltransferase activity; this is somewhat controversial. Makes several contacts with the 16S rRNA in the 70S ribosome. The sequence is that of Large ribosomal subunit protein uL2 from Brevibacillus brevis (strain 47 / JCM 6285 / NBRC 100599).